A 568-amino-acid chain; its full sequence is Glucose-6-phosphate isomerase, cytosolic 1 (568 aa).

Residue E360 is the Proton donor of the active site. Active-site residues include H391 and K516.

The protein belongs to the GPI family. As to quaternary structure, homodimer.

It is found in the cytoplasm. The catalysed reaction is alpha-D-glucose 6-phosphate = beta-D-fructose 6-phosphate. Its pathway is carbohydrate degradation; glycolysis; D-glyceraldehyde 3-phosphate and glycerone phosphate from D-glucose: step 2/4. This chain is Glucose-6-phosphate isomerase, cytosolic 1 (PGIC1), found in Clarkia mildrediae.